The following is an 81-amino-acid chain: ATP synthase subunit c, chloroplastic (81 aa).

A run of 2 helical transmembrane segments spans residues 3 to 23 (PIIS…ASIG) and 57 to 77 (LAFM…LLFA).

The protein belongs to the ATPase C chain family. F-type ATPases have 2 components, F(1) - the catalytic core - and F(0) - the membrane proton channel. F(1) has five subunits: alpha(3), beta(3), gamma(1), delta(1), epsilon(1). F(0) has four main subunits: a(1), b(1), b'(1) and c(10-14). The alpha and beta chains form an alternating ring which encloses part of the gamma chain. F(1) is attached to F(0) by a central stalk formed by the gamma and epsilon chains, while a peripheral stalk is formed by the delta, b and b' chains.

It localises to the plastid. It is found in the chloroplast thylakoid membrane. F(1)F(0) ATP synthase produces ATP from ADP in the presence of a proton or sodium gradient. F-type ATPases consist of two structural domains, F(1) containing the extramembraneous catalytic core and F(0) containing the membrane proton channel, linked together by a central stalk and a peripheral stalk. During catalysis, ATP synthesis in the catalytic domain of F(1) is coupled via a rotary mechanism of the central stalk subunits to proton translocation. In terms of biological role, key component of the F(0) channel; it plays a direct role in translocation across the membrane. A homomeric c-ring of between 10-14 subunits forms the central stalk rotor element with the F(1) delta and epsilon subunits. The protein is ATP synthase subunit c, chloroplastic of Phaseolus vulgaris (Kidney bean).